The following is a 205-amino-acid chain: Adenylyl-sulfate kinase (205 aa).

Residue 31–38 (GLSGAGKS) participates in ATP binding. S105 (phosphoserine intermediate) is an active-site residue.

The protein belongs to the APS kinase family.

It carries out the reaction adenosine 5'-phosphosulfate + ATP = 3'-phosphoadenylyl sulfate + ADP + H(+). Its pathway is sulfur metabolism; hydrogen sulfide biosynthesis; sulfite from sulfate: step 2/3. Catalyzes the synthesis of activated sulfate. The sequence is that of Adenylyl-sulfate kinase from Shewanella oneidensis (strain ATCC 700550 / JCM 31522 / CIP 106686 / LMG 19005 / NCIMB 14063 / MR-1).